A 584-amino-acid chain; its full sequence is Keratin, type I cytoskeletal 10 (584 aa).

Positions 1–15 (MSVRYSSSKHYSSSR) are enriched in low complexity. The tract at residues 1–24 (MSVRYSSSKHYSSSRSGGGGGGGG) is disordered. Positions 1-145 (MSVRYSSSKH…GGDGGLLSGN (145 aa)) are head. Phosphoserine occurs at positions 14, 16, 42, 53, 56, and 170. Positions 146–181 (EKVTMQNLNDRLASYLDKVRALEESNYELEGKIKEW) are coil 1A. The IF rod domain occupies 146-460 (EKVTMQNLND…SLLEGEGSSG (315 aa)). The interval 182–202 (YEKHGNSHQGEPRDYSKYYKT) is linker 1. The coil 1B stretch occupies residues 203 to 294 (IDDLKNQILN…KNHEEEMKDL (92 aa)). The tract at residues 295-317 (RNVSTGDVNVEMNAAPGVDLTQL) is linker 12. Residues 318 to 456 (LNNMRSQYEQ…QTYRSLLEGE (139 aa)) form a coil 2 region. Positions 453–584 (LEGEGSSGGG…GESSSKGPRY (132 aa)) are disordered. Positions 457–563 (GSSGGGGRGG…GGGYGGGSSS (107 aa)) are enriched in gly residues. The interval 457–584 (GSSGGGGRGG…GESSSKGPRY (128 aa)) is tail. Positions 564-584 (GGHKSSSSGSVGESSSKGPRY) are enriched in low complexity.

Belongs to the intermediate filament family. Heterotetramer of two type I and two type II keratins. Heterodimer with KRT1. Two heterodimers of KRT1 and KRT10 form a heterotetramer. The KRT10 subunit in the heterotetramer is probably disulfide-linked. Interacts with PLEC isoform 1C, when in a heterodimer with KRT1. In terms of assembly, (Microbial infection) Interacts (via C-terminal tail domain) with the S.aureus clumping factor, clfB; this interaction probably mediates S.aureus attachment to the keratinized squamous epithelial cells from the nasal cavity. As to quaternary structure, (Microbial infection) Interacts (via the C-terminal tail domain) with S.pneumoniae serine-rich repeat protein PsrP; this interaction probably mediates S.pneumoniae adherence to lung tissue and subsequent pathogenesis. Neither protein has to be glycosylated for the interaction to occur. As to expression, seen in all suprabasal cell layers including stratum corneum. Expressed on the surface of lung cell lines. Localized on the surface of desquamated nasal epithelial cells (at protein level).

Its subcellular location is the secreted. It localises to the extracellular space. The protein localises to the cell surface. It is found in the cytoplasm. Its function is as follows. Plays a role in the establishment of the epidermal barrier on plantar skin. Involved in the maintenance of cell layer development and keratin filament bundles in suprabasal cells of the epithelium. (Microbial infection) Acts as a mediator of S.aureus adherence to desquamated nasal epithelial cells via clfB, and hence may play a role in nasal colonization. In terms of biological role, (Microbial infection) Binds S.pneumoniae PsrP, mediating adherence of the bacteria to lung cell lines. Reduction of levels of KRT10 keratin decrease adherence, overexpression increases adherence. Neither protein has to be glycosylated for the interaction to occur. The chain is Keratin, type I cytoskeletal 10 (KRT10) from Homo sapiens (Human).